A 400-amino-acid chain; its full sequence is Phosphoglycerate kinase (400 aa).

Substrate-binding positions include 21-23 (DFN), Arg-36, 59-62 (HLGR), Arg-119, and Arg-160. Residues Lys-211, Glu-329, and 356–359 (GGDS) each bind ATP.

The protein belongs to the phosphoglycerate kinase family. In terms of assembly, monomer.

It localises to the cytoplasm. It catalyses the reaction (2R)-3-phosphoglycerate + ATP = (2R)-3-phospho-glyceroyl phosphate + ADP. It participates in carbohydrate degradation; glycolysis; pyruvate from D-glyceraldehyde 3-phosphate: step 2/5. The protein is Phosphoglycerate kinase of Levilactobacillus brevis (strain ATCC 367 / BCRC 12310 / CIP 105137 / JCM 1170 / LMG 11437 / NCIMB 947 / NCTC 947) (Lactobacillus brevis).